Consider the following 416-residue polypeptide: Peroxisomal isocitrate dehydrogenase [NADP] (416 aa).

NADP(+) is bound by residues 77–79 and R84; that span reads TIT. T79 contacts substrate. Residues 96-102, R111, and R134 contribute to the substrate site; that span reads SPNGTIR. D253 provides a ligand contact to Mn(2+). NADP(+) is bound at residue K261. D276 is a Mn(2+) binding site. NADP(+) contacts are provided by residues 311–316 and N329; that span reads GTVTRH. Residues 414-416 carry the Peroxisomal targeting signal motif; it reads SRL.

Belongs to the isocitrate and isopropylmalate dehydrogenases family. Mg(2+) is required as a cofactor. Requires Mn(2+) as cofactor.

Its subcellular location is the peroxisome. It carries out the reaction D-threo-isocitrate + NADP(+) = 2-oxoglutarate + CO2 + NADPH. Its function is as follows. May be involved in response to oxidative stresses. This chain is Peroxisomal isocitrate dehydrogenase [NADP] (ICDH), found in Arabidopsis thaliana (Mouse-ear cress).